Reading from the N-terminus, the 244-residue chain is Ureidoacrylate amidohydrolase RutB (244 aa).

Aspartate 38 (proton acceptor) is an active-site residue. Residue lysine 147 is part of the active site. Cysteine 180 functions as the Nucleophile in the catalytic mechanism.

Belongs to the isochorismatase family. RutB subfamily.

It catalyses the reaction (Z)-3-ureidoacrylate + H2O + H(+) = (Z)-3-aminoacrylate + NH4(+) + CO2. It carries out the reaction (Z)-3-ureidoacrylate + H2O = (Z)-3-aminoacrylate + carbamate + H(+). The enzyme catalyses (Z)-2-methylureidoacrylate + H2O + H(+) = (Z)-2-methylaminoacrylate + NH4(+) + CO2. In terms of biological role, hydrolyzes ureidoacrylate to form aminoacrylate and carbamate. The carbamate hydrolyzes spontaneously, thereby releasing one of the nitrogen atoms of the pyrimidine ring as ammonia and one of its carbon atoms as CO2. This Escherichia coli O1:K1 / APEC protein is Ureidoacrylate amidohydrolase RutB.